Here is a 358-residue protein sequence, read N- to C-terminus: MAEQEPKELLEMSTDTERLLEENDLRPLWEVEKDFGNQFGGFEADIWKWEDIQASIDAIERDVPIADLPPGFQRRVAVPVNTGYRNAISNTIYVGVQTVSPGETAPAHRHGANALRFTIDGSEDMKTVVAGEEFPMRDNDLITTPQWEWHDHVNDGDETAAWLDVLDLPLVLDSLNARNTFENHELDRQPVTKSQGYWESQYGRARPFEDTKEDGIPGPFEGNCAATPPYRFSWKDTLQTLRQRAENDDPDPHDGYSLSYVNPATGQPPLFPTMSFRAQLLQEETDPHFHNAVDAYFVIEGEGATHVGDDVLEWSERDIFVIPPDEIHHHDPDGEAILLGMTDRPVFEAFNFYAEAEP.

Residues 239–358 (QTLRQRAEND…AFNFYAEAEP (120 aa)) enclose the Cupin type-1 domain.

This sequence belongs to the gentisate 1,2-dioxygenase family. As to quaternary structure, homotetramer.

It carries out the reaction 2,5-dihydroxybenzoate + O2 = 3-maleylpyruvate + H(+). Its pathway is aromatic compound metabolism; naphthalene degradation. Its activity is regulated as follows. Inhibited by 2,2'-dipyridyl. Catalyzes the oxygen-dependent ring fission of gentisate between the carboxyl and proximal hydroxyl groups at positions 1 and 2 of the aromatic ring to form maleylpyruvate. No activity with cathechol and protecatechuate as substrates. Part of a 3-hydroxybenzoic acid-degradation pathway. This Haloferax sp protein is Gentisate 1,2-dioxygenase (gdoA).